Reading from the N-terminus, the 190-residue chain is dTTP/UTP pyrophosphatase (190 aa).

Aspartate 68 serves as the catalytic Proton acceptor.

It belongs to the Maf family. YhdE subfamily. It depends on a divalent metal cation as a cofactor.

It localises to the cytoplasm. It catalyses the reaction dTTP + H2O = dTMP + diphosphate + H(+). The enzyme catalyses UTP + H2O = UMP + diphosphate + H(+). Functionally, nucleoside triphosphate pyrophosphatase that hydrolyzes dTTP and UTP. May have a dual role in cell division arrest and in preventing the incorporation of modified nucleotides into cellular nucleic acids. This Pyrococcus furiosus (strain ATCC 43587 / DSM 3638 / JCM 8422 / Vc1) protein is dTTP/UTP pyrophosphatase.